The sequence spans 469 residues: UDP-N-acetylmuramate--L-alanine ligase (469 aa).

Residue 122–128 participates in ATP binding; sequence GTHGKTT.

It belongs to the MurCDEF family.

The protein resides in the cytoplasm. It catalyses the reaction UDP-N-acetyl-alpha-D-muramate + L-alanine + ATP = UDP-N-acetyl-alpha-D-muramoyl-L-alanine + ADP + phosphate + H(+). Its pathway is cell wall biogenesis; peptidoglycan biosynthesis. Functionally, cell wall formation. The sequence is that of UDP-N-acetylmuramate--L-alanine ligase from Legionella pneumophila (strain Lens).